The following is a 511-amino-acid chain: uncharacterized protein (511 aa).

A LisH domain is found at 13-45 (IYDALNMLVYDYLLKMKYEGSAKIFFNEAGLEN). The segment at 172-212 (PRFEEQGVPPAKMAPKQFRDEGRSGNVESPSIATNQEGSSP) is disordered. The span at 197–210 (NVESPSIATNQEGS) shows a compositional bias: polar residues.

This is an uncharacterized protein from Encephalitozoon cuniculi (strain GB-M1) (Microsporidian parasite).